The sequence spans 280 residues: 4-diphosphocytidyl-2-C-methyl-D-erythritol kinase (280 aa).

Lys8 is an active-site residue. 91-101 contacts ATP; the sequence is PVAAGLAGGST. Residue Asp133 is part of the active site.

Belongs to the GHMP kinase family. IspE subfamily.

The enzyme catalyses 4-CDP-2-C-methyl-D-erythritol + ATP = 4-CDP-2-C-methyl-D-erythritol 2-phosphate + ADP + H(+). It functions in the pathway isoprenoid biosynthesis; isopentenyl diphosphate biosynthesis via DXP pathway; isopentenyl diphosphate from 1-deoxy-D-xylulose 5-phosphate: step 3/6. Catalyzes the phosphorylation of the position 2 hydroxy group of 4-diphosphocytidyl-2C-methyl-D-erythritol. The chain is 4-diphosphocytidyl-2-C-methyl-D-erythritol kinase from Clostridium botulinum (strain Loch Maree / Type A3).